The chain runs to 504 residues: UDP-N-acetylmuramoylalanine--D-glutamate ligase (504 aa).

132 to 138 (GTNGKTT) is an ATP binding site. The segment covering 286-295 (DRDASDEPAP) has biased composition (basic and acidic residues). Positions 286 to 305 (DRDASDEPAPKRRRKNEVAT) are disordered.

It belongs to the MurCDEF family.

The protein resides in the cytoplasm. It catalyses the reaction UDP-N-acetyl-alpha-D-muramoyl-L-alanine + D-glutamate + ATP = UDP-N-acetyl-alpha-D-muramoyl-L-alanyl-D-glutamate + ADP + phosphate + H(+). The protein operates within cell wall biogenesis; peptidoglycan biosynthesis. Functionally, cell wall formation. Catalyzes the addition of glutamate to the nucleotide precursor UDP-N-acetylmuramoyl-L-alanine (UMA). This chain is UDP-N-acetylmuramoylalanine--D-glutamate ligase, found in Paraburkholderia xenovorans (strain LB400).